Consider the following 2475-residue polypeptide: Gellan lyase (2475 aa).

The N-terminal stretch at 1 to 35 (MRFSWKKLVSAALVMALLVGIVYPAASGRGAVASA) is a signal peptide. The Fibronectin type-III domain occupies 623–708 (APANVQVAIS…QPATATSPGE (86 aa)). Residues 1295–1518 (GAFSLTIDDN…RDQIWVGRYG (224 aa)) enclose the NodB homology domain. The Cohesin domain maps to 2111–2223 (QPGQQLELTV…VSTAVSLSDF (113 aa)).

Subject to proteolytic processing after secretion. Cleavage occurs between Gly-1205 and Leu-1206. This gives rise to a N-terminal gellan lyase of 130 kDa being the mature form of the gellan lyase. The function of C-terminal gellan lyase is not known.

It localises to the secreted. It carries out the reaction Eliminative cleavage of beta-D-glucopyranosyl-(1-&gt;4)-beta-D-glucopyranosyluronate bonds of gellan backbone releasing tetrasaccharides containing a 4-deoxy-4,5-unsaturated D-glucopyranosyluronic acid at the non-reducing end. The tetrasaccharide produced from deacetylated gellan is beta-D-4-deoxy-Delta(4)-GlcAp-(1-&gt;4)-beta-D-Glcp-(1-&gt;4)-alpha-L-Rhap-(1-&gt;3)-beta-D-Glcp.. In terms of biological role, cleaves the glycosidic bonds of gellan backbone and releases tetrasaccharide units of glucuronyl-glucosyl-rhamnosyl-glucose with unsaturated glucuronic acid at the non-reducing terminal. The enzyme is highly specific to the heteropolysaccharide gellan, especially deacetylated gellan. This chain is Gellan lyase, found in Bacillus sp.